A 230-amino-acid polypeptide reads, in one-letter code: Flagellar L-ring protein (230 aa).

A signal peptide spans 1–15 (MSRLPSLSRPCLAIA). C16 carries the N-palmitoyl cysteine lipid modification. Residue C16 is the site of S-diacylglycerol cysteine attachment.

This sequence belongs to the FlgH family. In terms of assembly, the basal body constitutes a major portion of the flagellar organelle and consists of four rings (L,P,S, and M) mounted on a central rod.

It is found in the cell outer membrane. Its subcellular location is the bacterial flagellum basal body. In terms of biological role, assembles around the rod to form the L-ring and probably protects the motor/basal body from shearing forces during rotation. The chain is Flagellar L-ring protein from Xanthomonas axonopodis pv. citri (strain 306).